A 240-amino-acid polypeptide reads, in one-letter code: RNA-free ribonuclease P (240 aa).

The protein belongs to the HARP family.

It carries out the reaction Endonucleolytic cleavage of RNA, removing 5'-extranucleotides from tRNA precursor.. Its function is as follows. RNA-free RNase P that catalyzes the removal of the 5'-leader sequence from pre-tRNA to produce the mature 5'-terminus. The chain is RNA-free ribonuclease P from Methanococcus aeolicus (strain ATCC BAA-1280 / DSM 17508 / OCM 812 / Nankai-3).